A 341-amino-acid polypeptide reads, in one-letter code: Adenine deaminase (341 aa).

Positions 17, 19, and 197 each coordinate Zn(2+). E200 serves as the catalytic Proton donor. A Zn(2+)-binding site is contributed by D278. D279 contacts substrate.

This sequence belongs to the metallo-dependent hydrolases superfamily. Adenosine and AMP deaminases family. Adenine deaminase type 2 subfamily. It depends on Zn(2+) as a cofactor.

The enzyme catalyses adenine + H2O + H(+) = hypoxanthine + NH4(+). In terms of biological role, catalyzes the hydrolytic deamination of adenine to hypoxanthine. Plays an important role in the purine salvage pathway and in nitrogen catabolism. The sequence is that of Adenine deaminase from Chlorobium luteolum (strain DSM 273 / BCRC 81028 / 2530) (Pelodictyon luteolum).